The sequence spans 89 residues: Small ribosomal subunit protein uS15 (89 aa).

The protein belongs to the universal ribosomal protein uS15 family. Part of the 30S ribosomal subunit. Forms a bridge to the 50S subunit in the 70S ribosome, contacting the 23S rRNA.

Functionally, one of the primary rRNA binding proteins, it binds directly to 16S rRNA where it helps nucleate assembly of the platform of the 30S subunit by binding and bridging several RNA helices of the 16S rRNA. In terms of biological role, forms an intersubunit bridge (bridge B4) with the 23S rRNA of the 50S subunit in the ribosome. The polypeptide is Small ribosomal subunit protein uS15 (Shewanella putrefaciens (strain CN-32 / ATCC BAA-453)).